The primary structure comprises 505 residues: Nicotinamide phosphoribosyltransferase (505 aa).

A diphosphate-binding site is contributed by Arg-196. Residue Asp-219 participates in beta-nicotinamide D-ribonucleotide binding. The diphosphate site is built by His-246 and Arg-314. Beta-nicotinamide D-ribonucleotide is bound by residues 314–316 (RPD), 369–370 (GD), and Arg-408.

It belongs to the NAPRTase family.

The enzyme catalyses beta-nicotinamide D-ribonucleotide + diphosphate = 5-phospho-alpha-D-ribose 1-diphosphate + nicotinamide + H(+). The protein operates within cofactor biosynthesis; NAD(+) biosynthesis; nicotinamide D-ribonucleotide from 5-phospho-alpha-D-ribose 1-diphosphate and nicotinamide: step 1/1. With respect to regulation, 10-fold more active in the presence of saturating ATP. Catalyzes the condensation of nicotinamide with 5-phosphoribosyl-1-pyrophosphate to yield nicotinamide mononucleotide, an intermediate in the biosynthesis of NAD. Functions in the nondeamidating salvage pathway for production of NAD from nicotinamide. Displays a strict preference for nicotinamide over nicotinate substrate. In Acinetobacter baylyi (strain ATCC 33305 / BD413 / ADP1), this protein is Nicotinamide phosphoribosyltransferase.